We begin with the raw amino-acid sequence, 417 residues long: Proteasome-activating nucleotidase (417 aa).

Residues 24 to 78 (SKYLLDRVKQLEERNVRLKEEYRKIELEKKSVENKKVQYEREIRKLTSELDRLKT) adopt a coiled-coil conformation. ATP is bound by residues 203–208 (GTGKTL) and H342. Residues 415–417 (MFA) form a docks into pockets in the proteasome alpha-ring to cause gate opening region.

The protein belongs to the AAA ATPase family. Homohexamer. The hexameric complex has a two-ring architecture resembling a top hat that caps the 20S proteasome core at one or both ends. Upon ATP-binding, the C-terminus of PAN interacts with the alpha-rings of the proteasome core by binding to the intersubunit pockets.

The protein resides in the cytoplasm. In terms of biological role, ATPase which is responsible for recognizing, binding, unfolding and translocation of substrate proteins into the archaeal 20S proteasome core particle. Is essential for opening the gate of the 20S proteasome via an interaction with its C-terminus, thereby allowing substrate entry and access to the site of proteolysis. Thus, the C-termini of the proteasomal ATPase function like a 'key in a lock' to induce gate opening and therefore regulate proteolysis. Unfolding activity requires energy from ATP hydrolysis, whereas ATP binding alone promotes ATPase-20S proteasome association which triggers gate opening, and supports translocation of unfolded substrates. This chain is Proteasome-activating nucleotidase, found in Methanocella arvoryzae (strain DSM 22066 / NBRC 105507 / MRE50).